Reading from the N-terminus, the 149-residue chain is UPF0178 protein Mmwyl1_2258 (149 aa).

It belongs to the UPF0178 family.

The chain is UPF0178 protein Mmwyl1_2258 from Marinomonas sp. (strain MWYL1).